Here is a 320-residue protein sequence, read N- to C-terminus: Malate dehydrogenase (320 aa).

NAD(+) is bound by residues 10-15 (GSGMIG) and Asp-34. Residues Arg-83 and Arg-89 each contribute to the substrate site. NAD(+) is bound by residues Asn-96 and 119–121 (ITN). Positions 121 and 152 each coordinate substrate. His-176 functions as the Proton acceptor in the catalytic mechanism.

It belongs to the LDH/MDH superfamily. MDH type 3 family.

The enzyme catalyses (S)-malate + NAD(+) = oxaloacetate + NADH + H(+). In terms of biological role, catalyzes the reversible oxidation of malate to oxaloacetate. The protein is Malate dehydrogenase of Bartonella quintana (strain Toulouse) (Rochalimaea quintana).